The primary structure comprises 252 residues: Geranylgeranylglyceryl phosphate synthase (252 aa).

Mg(2+) is bound by residues aspartate 22 and serine 51. Sn-glycerol 1-phosphate-binding positions include tyrosine 170 to glycine 176, glycine 201 to glycine 202, and glycine 223 to serine 224.

This sequence belongs to the GGGP/HepGP synthase family. Group II subfamily. Mg(2+) is required as a cofactor.

It is found in the cytoplasm. The enzyme catalyses sn-glycerol 1-phosphate + (2E,6E,10E)-geranylgeranyl diphosphate = sn-3-O-(geranylgeranyl)glycerol 1-phosphate + diphosphate. It functions in the pathway membrane lipid metabolism; glycerophospholipid metabolism. Its function is as follows. Prenyltransferase that catalyzes the transfer of the geranylgeranyl moiety of geranylgeranyl diphosphate (GGPP) to the C3 hydroxyl of sn-glycerol-1-phosphate (G1P). This reaction is the first ether-bond-formation step in the biosynthesis of archaeal membrane lipids. In Thermoplasma volcanium (strain ATCC 51530 / DSM 4299 / JCM 9571 / NBRC 15438 / GSS1), this protein is Geranylgeranylglyceryl phosphate synthase.